The primary structure comprises 1264 residues: Regulator of G-protein signaling 22 (1264 aa).

Residues 565–587 are disordered; it reads EEFSLSQPPKSPNKSPEVKTATQ. The span at 568–578 shows a compositional bias: polar residues; that stretch reads SLSQPPKSPNK. 2 consecutive RGS domains span residues 852 to 980 and 1021 to 1145; these read KFSD…AARQ and AFRK…TDEN. Residues 1142–1174 adopt a coiled-coil conformation; the sequence is TDENIMSVLERRQEYNKQKKKLAVLEDEKSGKD.

Interacts with GNA11, GNA12 and GNA13. Testis-specific. Expressed in Leydig cells and spermatogenic cells from the spermatogonia to spermatid stages (at protein level).

Its subcellular location is the cytoplasm. It localises to the nucleus. In terms of biological role, inhibits signal transduction by increasing the GTPase activity of G protein alpha subunits thereby driving them into their inactive GDP-bound form. This Homo sapiens (Human) protein is Regulator of G-protein signaling 22 (RGS22).